Reading from the N-terminus, the 365-residue chain is Serpentine receptor class epsilon-38 (365 aa).

A run of 7 helical transmembrane segments spans residues 26 to 46 (GMYL…GVII), 65 to 85 (IMTA…LLII), 124 to 144 (ALVI…FGIL), 168 to 188 (IPVF…YFVL), 196 to 216 (LGTS…LAVW), 256 to 276 (LVIV…CLVI), and 285 to 305 (IFIH…CSTL).

It belongs to the nematode receptor-like protein sre family.

The protein resides in the membrane. In Caenorhabditis elegans, this protein is Serpentine receptor class epsilon-38 (sre-38).